A 172-amino-acid chain; its full sequence is MVDKRESYTKTDLEASGRGELFGAGGPPLPSGNMLMMDRVIKMTEDGGSHNKGYVEAELDINPDLWFFACHFVGDPVMPGCLGLDAMWQLVGFYLGWLGGEGKGRALGVGEVKFTGQVLPTAKKVTYRIHFKRVINRKLIMGLADGEVLVDGKLIYTANDLKVGLFKDTSAF.

The active site involves His-71.

It belongs to the thioester dehydratase family. FabA subfamily. As to quaternary structure, homodimer.

The protein localises to the cytoplasm. It catalyses the reaction a (3R)-hydroxyacyl-[ACP] = a (2E)-enoyl-[ACP] + H2O. The enzyme catalyses (3R)-hydroxydecanoyl-[ACP] = (2E)-decenoyl-[ACP] + H2O. The catalysed reaction is (2E)-decenoyl-[ACP] = (3Z)-decenoyl-[ACP]. It participates in lipid metabolism; fatty acid biosynthesis. Its function is as follows. Necessary for the introduction of cis unsaturation into fatty acids. Catalyzes the dehydration of (3R)-3-hydroxydecanoyl-ACP to E-(2)-decenoyl-ACP and then its isomerization to Z-(3)-decenoyl-ACP. Can catalyze the dehydratase reaction for beta-hydroxyacyl-ACPs with saturated chain lengths up to 16:0, being most active on intermediate chain length. This chain is 3-hydroxydecanoyl-[acyl-carrier-protein] dehydratase, found in Edwardsiella ictaluri (strain 93-146).